We begin with the raw amino-acid sequence, 370 residues long: Glutamate 5-kinase (370 aa).

Lys11 is an ATP binding site. Ser52, Asp139, and Asn151 together coordinate substrate. ATP is bound by residues 171–172 (TD) and 213–219 (TGGMATK). The region spanning 278–356 (TGKLLLDAGA…DQIVQILGYE (79 aa)) is the PUA domain.

This sequence belongs to the glutamate 5-kinase family.

Its subcellular location is the cytoplasm. It catalyses the reaction L-glutamate + ATP = L-glutamyl 5-phosphate + ADP. It functions in the pathway amino-acid biosynthesis; L-proline biosynthesis; L-glutamate 5-semialdehyde from L-glutamate: step 1/2. Catalyzes the transfer of a phosphate group to glutamate to form L-glutamate 5-phosphate. The chain is Glutamate 5-kinase from Synechococcus sp. (strain ATCC 27144 / PCC 6301 / SAUG 1402/1) (Anacystis nidulans).